The primary structure comprises 353 residues: Rhodopsin (353 aa).

The Extracellular portion of the chain corresponds to 1–36 (MNGTEGPYFYVPMVNTSGIVRSPYEYPQYYLVNPAA). N2 and N15 each carry an N-linked (GlcNAc...) asparagine glycan. A helical membrane pass occupies residues 37–61 (YAALGAYMFLLILVGFPINFLTLYV). At 62 to 73 (TIEHKKLRTPLN) the chain is on the cytoplasmic side. A helical transmembrane segment spans residues 74-96 (YILLNLAVADLFMVFGGFTTTMY). At 97–110 (TSMHGYFVLGRLGC) the chain is on the extracellular side. C110 and C187 are disulfide-bonded. Residues 111 to 133 (NIEGFFATLGGEIALWSLVVLAI) form a helical membrane-spanning segment. The short motif at 134 to 136 (ERW) is the 'Ionic lock' involved in activated form stabilization element. The Cytoplasmic segment spans residues 134-152 (ERWVVVCKPISNFRFGENH). A helical membrane pass occupies residues 153-173 (AIMGLAFTWLMALACAAPPLV). The Extracellular segment spans residues 174–202 (GWSRYIPEGMQCSCGIDYYTRAEGFNNES). The N-linked (GlcNAc...) asparagine glycan is linked to N200. A helical transmembrane segment spans residues 203–224 (FVIYMFICHFSIPLLVVFFCYG). Residues 225–252 (RLLCAVKEAAAAQQESETTQRAEREVTR) lie on the Cytoplasmic side of the membrane. A helical transmembrane segment spans residues 253 to 274 (MVIMMVIAFLVCWLPYASVAWW). Residues 275–286 (IFTHQGSDFGPV) are Extracellular-facing. Residues 287 to 308 (FMTIPAFFAKSSSIYNPMIYIC) traverse the membrane as a helical segment. Position 296 is an N6-(retinylidene)lysine (K296). Residues 309–353 (LNKQFRHCMITTLCCGKNPFEEEEGASTASKTEASSVSSSSVSPA) lie on the Cytoplasmic side of the membrane. S-palmitoyl cysteine attachment occurs at residues C322 and C323. The disordered stretch occupies residues 331 to 353 (EEGASTASKTEASSVSSSSVSPA). Residues 334 to 353 (ASTASKTEASSVSSSSVSPA) are compositionally biased toward low complexity.

Belongs to the G-protein coupled receptor 1 family. Opsin subfamily. In terms of processing, phosphorylated on some or all of the serine and threonine residues present in the C-terminal region. Post-translationally, contains one covalently linked retinal chromophore.

It is found in the membrane. Its subcellular location is the cell projection. The protein resides in the cilium. The protein localises to the photoreceptor outer segment. Functionally, photoreceptor required for image-forming vision at low light intensity. While most salt water fish species use retinal as chromophore, most freshwater fish use 3-dehydroretinal, or a mixture of retinal and 3-dehydroretinal. Light-induced isomerization of 11-cis to all-trans retinal triggers a conformational change that activates signaling via G-proteins. Subsequent receptor phosphorylation mediates displacement of the bound G-protein alpha subunit by arrestin and terminates signaling. The polypeptide is Rhodopsin (rho) (Diplodus vulgaris (Common two-banded seabream)).